The chain runs to 107 residues: Small ribosomal subunit protein uS17 (107 aa).

This sequence belongs to the universal ribosomal protein uS17 family. As to quaternary structure, part of the 30S ribosomal subunit.

In terms of biological role, one of the primary rRNA binding proteins, it binds specifically to the 5'-end of 16S ribosomal RNA. The protein is Small ribosomal subunit protein uS17 of Thermotoga sp. (strain RQ2).